A 162-amino-acid chain; its full sequence is Cyclic pyranopterin monophosphate synthase (162 aa).

Substrate contacts are provided by residues 75–77 and 113–114; these read LCH and ME. D128 is a catalytic residue.

The protein belongs to the MoaC family. Homohexamer; trimer of dimers.

The catalysed reaction is (8S)-3',8-cyclo-7,8-dihydroguanosine 5'-triphosphate = cyclic pyranopterin phosphate + diphosphate. It participates in cofactor biosynthesis; molybdopterin biosynthesis. Functionally, catalyzes the conversion of (8S)-3',8-cyclo-7,8-dihydroguanosine 5'-triphosphate to cyclic pyranopterin monophosphate (cPMP). The polypeptide is Cyclic pyranopterin monophosphate synthase (Burkholderia orbicola (strain MC0-3)).